A 454-amino-acid polypeptide reads, in one-letter code: Probable mitochondrial saccharopine dehydrogenase-like oxidoreductase At5g39410 (454 aa).

An N-acetylmethionine modification is found at Met-1. The interval 215 to 234 (RRSRPRRPRPTICGPPAKGP) is disordered.

Belongs to the saccharopine dehydrogenase family.

The protein localises to the mitochondrion membrane. The chain is Probable mitochondrial saccharopine dehydrogenase-like oxidoreductase At5g39410 from Arabidopsis thaliana (Mouse-ear cress).